The primary structure comprises 320 residues: 4-diphosphocytidyl-2-C-methyl-D-erythritol kinase (320 aa).

Lys20 is a catalytic residue. 112–122 (PVAGGMGGGSA) lines the ATP pocket. The active site involves Asp154.

Belongs to the GHMP kinase family. IspE subfamily.

The catalysed reaction is 4-CDP-2-C-methyl-D-erythritol + ATP = 4-CDP-2-C-methyl-D-erythritol 2-phosphate + ADP + H(+). It participates in isoprenoid biosynthesis; isopentenyl diphosphate biosynthesis via DXP pathway; isopentenyl diphosphate from 1-deoxy-D-xylulose 5-phosphate: step 3/6. Catalyzes the phosphorylation of the position 2 hydroxy group of 4-diphosphocytidyl-2C-methyl-D-erythritol. This is 4-diphosphocytidyl-2-C-methyl-D-erythritol kinase from Arthrobacter sp. (strain FB24).